We begin with the raw amino-acid sequence, 399 residues long: Coenzyme A biosynthesis bifunctional protein CoaBC (399 aa).

Residues 1 to 190 (MQSLAGKKIL…FAPKILVGKR (190 aa)) are phosphopantothenoylcysteine decarboxylase. Cysteine 159 (proton donor) is an active-site residue. The interval 191–399 (VLITAGPTRE…AVMHLIHEQM (209 aa)) is phosphopantothenate--cysteine ligase. CTP contacts are provided by residues aspartate 279, lysine 289, 307–310 (PDIV), phenylalanine 326, lysine 340, and lysine 344.

In the N-terminal section; belongs to the HFCD (homo-oligomeric flavin containing Cys decarboxylase) superfamily. The protein in the C-terminal section; belongs to the PPC synthetase family. It depends on Mg(2+) as a cofactor. The cofactor is FMN.

It carries out the reaction N-[(R)-4-phosphopantothenoyl]-L-cysteine + H(+) = (R)-4'-phosphopantetheine + CO2. The enzyme catalyses (R)-4'-phosphopantothenate + L-cysteine + CTP = N-[(R)-4-phosphopantothenoyl]-L-cysteine + CMP + diphosphate + H(+). It participates in cofactor biosynthesis; coenzyme A biosynthesis; CoA from (R)-pantothenate: step 2/5. Its pathway is cofactor biosynthesis; coenzyme A biosynthesis; CoA from (R)-pantothenate: step 3/5. In terms of biological role, catalyzes two sequential steps in the biosynthesis of coenzyme A. In the first step cysteine is conjugated to 4'-phosphopantothenate to form 4-phosphopantothenoylcysteine. In the second step the latter compound is decarboxylated to form 4'-phosphopantotheine. This chain is Coenzyme A biosynthesis bifunctional protein CoaBC, found in Vibrio cholerae serotype O1 (strain ATCC 39315 / El Tor Inaba N16961).